The following is a 101-amino-acid chain: Small ribosomal subunit protein uS14 (101 aa).

This sequence belongs to the universal ribosomal protein uS14 family. Part of the 30S ribosomal subunit. Contacts proteins S3 and S10.

Binds 16S rRNA, required for the assembly of 30S particles and may also be responsible for determining the conformation of the 16S rRNA at the A site. The chain is Small ribosomal subunit protein uS14 from Cereibacter sphaeroides (strain ATCC 17029 / ATH 2.4.9) (Rhodobacter sphaeroides).